The following is a 313-amino-acid chain: Aspartoacylase (313 aa).

The Zn(2+) site is built by His-21 and Glu-24. N-acetyl-L-aspartate is bound by residues Arg-63, Asn-70, and Arg-71. His-116 is a binding site for Zn(2+). The N-acetyl-L-aspartate site is built by Tyr-164 and Arg-168. Glu-178 functions as the Proton donor/acceptor in the catalytic mechanism. Tyr-288 provides a ligand contact to N-acetyl-L-aspartate.

It belongs to the AspA/AstE family. Aspartoacylase subfamily. As to quaternary structure, homodimer. It depends on Zn(2+) as a cofactor.

It is found in the cytoplasm. Its subcellular location is the nucleus. The enzyme catalyses an N-acyl-L-aspartate + H2O = a carboxylate + L-aspartate. The catalysed reaction is N-acetyl-L-aspartate + H2O = L-aspartate + acetate. Catalyzes the deacetylation of N-acetylaspartic acid (NAA) to produce acetate and L-aspartate. NAA occurs in high concentration in brain and its hydrolysis NAA plays a significant part in the maintenance of intact white matter. In other tissues it acts as a scavenger of NAA from body fluids. The sequence is that of Aspartoacylase from Pongo abelii (Sumatran orangutan).